Consider the following 301-residue polypeptide: MPTLRQPDGVLSVALSHSVVSEYRECDSLPDIDQRVAHALTMEVMLTPKPGLVDRANNGAHRDMDVALFQTSIQAISPWFRHFTDAGYQHANIPLAQLLSQVRPIGIACEQAMLSATKGVNTHKGGIFAFGLLCTAAGWLAGRGERVTQRSLCDSVAAMCHDLVRNELETCSGAATAGEHLYQRHGLTGARGEAASGFNTVCQYALPALQQAIAAGADNETALLRTLLVLMAHNPDTNVVSRGGMDGLAFVQAYAQKLLVGPLDRQALIKMDDALIARNLSPGGSADLLALTWLLYHYPAE.

This sequence belongs to the CitG/MdcB family.

The enzyme catalyses 3'-dephospho-CoA + ATP = 2'-(5''-triphospho-alpha-D-ribosyl)-3'-dephospho-CoA + adenine. This is Probable 2-(5''-triphosphoribosyl)-3'-dephosphocoenzyme-A synthase from Pectobacterium carotovorum subsp. carotovorum (strain PC1).